We begin with the raw amino-acid sequence, 331 residues long: NADH-quinone oxidoreductase subunit H 2 (331 aa).

Transmembrane regions (helical) follow at residues 6–26, 79–99, 120–140, 155–175, 193–213, 242–262, 271–291, and 310–330; these read AGFLVLIAKLTIVLAVLLLVA, IFMLAPAVVAATALLVFAVIP, VGLLYFFALSSLGVYGVALGG, GAAQMISYELSLGLAIVPVVM, PFILTQPVAFAIFVISAMAEI, LFFLGEYVNMQVLGGLVAVLF, LPPVVWLFIKIVLVALIMIWV, and VLIPLALVNIMVTGAWVLWMG.

This sequence belongs to the complex I subunit 1 family. As to quaternary structure, NDH-1 is composed of 14 different subunits. Subunits NuoA, H, J, K, L, M, N constitute the membrane sector of the complex.

It localises to the cell inner membrane. It carries out the reaction a quinone + NADH + 5 H(+)(in) = a quinol + NAD(+) + 4 H(+)(out). Its function is as follows. NDH-1 shuttles electrons from NADH, via FMN and iron-sulfur (Fe-S) centers, to quinones in the respiratory chain. The immediate electron acceptor for the enzyme in this species is believed to be ubiquinone. Couples the redox reaction to proton translocation (for every two electrons transferred, four hydrogen ions are translocated across the cytoplasmic membrane), and thus conserves the redox energy in a proton gradient. This subunit may bind ubiquinone. This chain is NADH-quinone oxidoreductase subunit H 2, found in Syntrophobacter fumaroxidans (strain DSM 10017 / MPOB).